Here is a 214-residue protein sequence, read N- to C-terminus: 3-demethoxyubiquinol 3-hydroxylase (214 aa).

Fe cation-binding residues include glutamate 63, glutamate 93, histidine 96, glutamate 145, glutamate 177, and histidine 180.

The protein belongs to the COQ7 family. It depends on Fe cation as a cofactor.

It is found in the cell membrane. The enzyme catalyses a 5-methoxy-2-methyl-3-(all-trans-polyprenyl)benzene-1,4-diol + AH2 + O2 = a 3-demethylubiquinol + A + H2O. Its pathway is cofactor biosynthesis; ubiquinone biosynthesis. Its function is as follows. Catalyzes the hydroxylation of 2-nonaprenyl-3-methyl-6-methoxy-1,4-benzoquinol during ubiquinone biosynthesis. In Psychrobacter arcticus (strain DSM 17307 / VKM B-2377 / 273-4), this protein is 3-demethoxyubiquinol 3-hydroxylase.